We begin with the raw amino-acid sequence, 883 residues long: MNEQYSALRSNVSMLGKVLGETIKDALGEHILDRVETIRKLSKSSRAGNEANRQELLTTLQNLSNDELLPVARAFSQFLNLANTAEQYHSISPKGEAASNPEVIAHTLRKLKNQPDLNDATIKKAVESLSLELVLTAHPTEITRRTLIHKMGEINNCLKQLDNTDIADYERHQVMRRLRQLIAQSWHTDEIRKQRPSPVDEAKWGFAVVENSLWQGVPNYLRELNEQLEENLGYKLPVDFVPVRFTSWMGGDRDGNPNVTAEITRHVLLLSRWKATDLFLKDIHVLVSELSMVDATPELLALVGEEGASEPYRYLMKKLRARLMATQSWLEARLKGEKLPKPAGLLTQNEQLWEPLYACYQSLQACGMGIIANGELLDTLRRVKCFGVPLVRIDIRQESTRHTEALGEITRYLGIGDYESWSEADKQAFLIRELNSKRPLLPRNWEPSNDTREVLETCKVIAEAPKGSIAAYVISMAKTPSDVLAVHLLLKEAGIGFAMPVAPLFETLDDLNNADDVMTQLLNIDWYRGLIQGKQMVMIGYSDSAKDAGVMAASWAQYQAQDALIKTCEKAGIELTLFHGRGGSIGRGGAPAHAALLSQPPGSLKGGLRVTEQGEMIRFKYGLPEVTVSSLSLYTSAILEANLLPPPEPKDSWRHIMDELSVISCETYRGYVRENKDFVPYFRSATPEQELGKLPLGSRPAKRRPTGGVESLRAIPWIFAWTQNRLMLPAWLGAGTALQKVVEDGKQSELEAMCRDWPFFSTRLGMLEMVFSKADLWLADYYDQRLVAKTLWPLGKELRDLLEEDIKVVLAIANDSHLMADLPWIAESIQLRNVYTDPLNVLQAELLYRSRLTEEQGKSPDPRVEQALMVTIAGVAAGMRNTG.

Residues histidine 138 and lysine 546 contribute to the active site.

It belongs to the PEPCase type 1 family. As to quaternary structure, homotetramer. Mg(2+) is required as a cofactor.

The catalysed reaction is oxaloacetate + phosphate = phosphoenolpyruvate + hydrogencarbonate. With respect to regulation, the enzyme has distinct binding sites for each of the allosteric effectors such as acetyl-CoA, fructose 1,6-bisphosphate, guanosine 3'-diphosphate 5'-diphosphate, long chain fatty acids, and L-aspartate. Forms oxaloacetate, a four-carbon dicarboxylic acid source for the tricarboxylic acid cycle. The protein is Phosphoenolpyruvate carboxylase (ppc) of Salmonella typhi.